A 345-amino-acid polypeptide reads, in one-letter code: Phosphoribosylformylglycinamidine cyclo-ligase (345 aa).

The protein belongs to the AIR synthase family.

The protein localises to the cytoplasm. The catalysed reaction is 2-formamido-N(1)-(5-O-phospho-beta-D-ribosyl)acetamidine + ATP = 5-amino-1-(5-phospho-beta-D-ribosyl)imidazole + ADP + phosphate + H(+). It participates in purine metabolism; IMP biosynthesis via de novo pathway; 5-amino-1-(5-phospho-D-ribosyl)imidazole from N(2)-formyl-N(1)-(5-phospho-D-ribosyl)glycinamide: step 2/2. The protein is Phosphoribosylformylglycinamidine cyclo-ligase of Shigella dysenteriae serotype 1 (strain Sd197).